Reading from the N-terminus, the 409-residue chain is TNF receptor-associated factor family protein DDB_G0273435/DDB_G0273505 (409 aa).

The RING-type; degenerate zinc-finger motif lies at 20 to 59 (CQLCCNLMNESVSCPNGHCLCKGCFHKQIETVKSECPICC). TRAF-type zinc fingers lie at residues 75 to 145 (KHIN…EIEN) and 145 to 201 (NHQD…HELS). The stretch at 221–250 (HQSLLKSTSKQLKQLRSSCEELETKLINND) forms a coiled coil. The 129-residue stretch at 252–380 (SFNGRWIIKQ…NDQLIIKFNI (129 aa)) folds into the MATH domain.

The protein belongs to the TNF receptor-associated factor family. A subfamily.

Its subcellular location is the cytoplasm. Its function is as follows. Probable adapter protein and signal transducer that links members of the tumor necrosis factor receptor family to different signaling pathways by association with the receptor cytoplasmic domain and kinases. In Dictyostelium discoideum (Social amoeba), this protein is TNF receptor-associated factor family protein DDB_G0273435/DDB_G0273505.